The chain runs to 264 residues: MSAEKGELDLNGAKQNTGMWLVKLPKYLAQQWAKATGRGEVGKLRIVKNQGKTEVSFTLNEELASIQDIGGKPASSLVSTPREHPFLLQSVGGQTLTVLTESLSGQSEDKSENRVIDKLALEGIVVHRAECRPAASDNYMQMKRKQIEESSKPKRQSQQLEKAVTSNYKPVSNHQYNIEYEKKKKDDGKRARVDKHQVLDMLFSAFEKHQYYNIKDLVDITKQPVTYLKEILRDIGIYNMKGTHKNTWELKPEYRHYQGEDKSD.

It belongs to the TFIIF beta subunit family. Heterodimer of an alpha and a beta subunit.

The protein resides in the nucleus. In terms of biological role, TFIIF is a general transcription initiation factor that binds to RNA polymerase II and helps to recruit it to the initiation complex in collaboration with TFIIB. This chain is General transcription factor IIF subunit 2 (gtf2f2), found in Xenopus laevis (African clawed frog).